The primary structure comprises 115 residues: NAD(P)H-quinone oxidoreductase subunit M (115 aa).

It belongs to the complex I NdhM subunit family. In terms of assembly, NDH-1 can be composed of about 15 different subunits; different subcomplexes with different compositions have been identified which probably have different functions.

The protein localises to the cellular thylakoid membrane. It carries out the reaction a plastoquinone + NADH + (n+1) H(+)(in) = a plastoquinol + NAD(+) + n H(+)(out). The enzyme catalyses a plastoquinone + NADPH + (n+1) H(+)(in) = a plastoquinol + NADP(+) + n H(+)(out). Functionally, NDH-1 shuttles electrons from an unknown electron donor, via FMN and iron-sulfur (Fe-S) centers, to quinones in the respiratory and/or the photosynthetic chain. The immediate electron acceptor for the enzyme in this species is believed to be plastoquinone. Couples the redox reaction to proton translocation, and thus conserves the redox energy in a proton gradient. Cyanobacterial NDH-1 also plays a role in inorganic carbon-concentration. The sequence is that of NAD(P)H-quinone oxidoreductase subunit M from Prochlorococcus marinus (strain MIT 9303).